A 123-amino-acid polypeptide reads, in one-letter code: Large ribosomal subunit protein uL14 (123 aa).

This sequence belongs to the universal ribosomal protein uL14 family. As to quaternary structure, part of the 50S ribosomal subunit. Forms a cluster with proteins L3 and L19. In the 70S ribosome, L14 and L19 interact and together make contacts with the 16S rRNA in bridges B5 and B8.

Binds to 23S rRNA. Forms part of two intersubunit bridges in the 70S ribosome. The protein is Large ribosomal subunit protein uL14 of Citrobacter koseri (strain ATCC BAA-895 / CDC 4225-83 / SGSC4696).